Reading from the N-terminus, the 367-residue chain is Aminomethyltransferase (367 aa).

This sequence belongs to the GcvT family. The glycine cleavage system is composed of four proteins: P, T, L and H.

The enzyme catalyses N(6)-[(R)-S(8)-aminomethyldihydrolipoyl]-L-lysyl-[protein] + (6S)-5,6,7,8-tetrahydrofolate = N(6)-[(R)-dihydrolipoyl]-L-lysyl-[protein] + (6R)-5,10-methylene-5,6,7,8-tetrahydrofolate + NH4(+). Its function is as follows. The glycine cleavage system catalyzes the degradation of glycine. This Saccharopolyspora erythraea (strain ATCC 11635 / DSM 40517 / JCM 4748 / NBRC 13426 / NCIMB 8594 / NRRL 2338) protein is Aminomethyltransferase.